The primary structure comprises 606 residues: Endonuclease 8-like 3 (606 aa).

The active-site Schiff-base intermediate with DNA; via amino nitrogen is Val-2. The segment at 31–51 is disordered; sequence ALQGLGGPGSPPAAPGPMGTS. Asn-194 and Arg-273 together coordinate DNA. An FPG-type zinc finger spans residues 249 to 283; that stretch reads KVYKRPNCGQCCCKITVCRLGENNRMTYFCPHCQK. The segment at 319–348 adopts a RanBP2-type zinc-finger fold; that stretch reads SEEQWTCEVCTLINKLSSKTCDACLTSRPA. Ser-451 is subject to Phosphoserine. 8 residues coordinate Zn(2+): Cys-508, His-511, Cys-534, Cys-542, Cys-555, His-557, Cys-580, and Cys-588. 2 GRF-type zinc fingers span residues 508–551 and 555–597; these read CSKH…ADLS and CNHG…AQNG.

Belongs to the FPG family.

It localises to the nucleus. Its subcellular location is the chromosome. The catalysed reaction is 2'-deoxyribonucleotide-(2'-deoxyribose 5'-phosphate)-2'-deoxyribonucleotide-DNA = a 3'-end 2'-deoxyribonucleotide-(2,3-dehydro-2,3-deoxyribose 5'-phosphate)-DNA + a 5'-end 5'-phospho-2'-deoxyribonucleoside-DNA + H(+). Functionally, DNA glycosylase which prefers single-stranded DNA (ssDNA), or partially ssDNA structures such as bubble and fork structures, to double-stranded DNA (dsDNA). Mediates interstrand cross-link repair in response to replication stress: acts by mediating DNA glycosylase activity, cleaving one of the two N-glycosyl bonds comprising the interstrand cross-link, which avoids the formation of a double-strand break but generates an abasic site that is bypassed by translesion synthesis polymerases. In vitro, displays strong glycosylase activity towards the hydantoin lesions spiroiminodihydantoin (Sp) and guanidinohydantoin (Gh) in both ssDNA and dsDNA; also recognizes FapyA, FapyG, 5-OHU, 5-OHC, 5-OHMH, Tg and 8-oxoA lesions in ssDNA. No activity on 8-oxoG detected. Also shows weak DNA-(apurinic or apyrimidinic site) lyase activity. In vivo, appears to be the primary enzyme involved in removing Sp and Gh from ssDNA in neonatal tissues. The sequence is that of Endonuclease 8-like 3 (NEIL3) from Bos taurus (Bovine).